A 212-amino-acid polypeptide reads, in one-letter code: Cytidylate kinase (212 aa).

Residue 9 to 17 (GPAAAGKGT) participates in ATP binding.

This sequence belongs to the cytidylate kinase family. Type 1 subfamily.

Its subcellular location is the cytoplasm. It carries out the reaction CMP + ATP = CDP + ADP. The enzyme catalyses dCMP + ATP = dCDP + ADP. The sequence is that of Cytidylate kinase from Sinorhizobium medicae (strain WSM419) (Ensifer medicae).